Reading from the N-terminus, the 615-residue chain is DNA mismatch repair protein MutL (615 aa).

The interval 363-397 (FAEPAAREPVAPRYTPAPASGSRPAAPWPNAQPGY) is disordered. Positions 364–391 (AEPAAREPVAPRYTPAPASGSRPAAPWP) are enriched in low complexity.

This sequence belongs to the DNA mismatch repair MutL/HexB family.

Its function is as follows. This protein is involved in the repair of mismatches in DNA. It is required for dam-dependent methyl-directed DNA mismatch repair. May act as a 'molecular matchmaker', a protein that promotes the formation of a stable complex between two or more DNA-binding proteins in an ATP-dependent manner without itself being part of a final effector complex. In Escherichia coli O8 (strain IAI1), this protein is DNA mismatch repair protein MutL.